We begin with the raw amino-acid sequence, 185 residues long: NAD(P)H-dependent FAD/FMN reductase GTNG_3158 (185 aa).

As to quaternary structure, anthranilate 3-monooxygenase consists of a reductase component (GTNG_3158) and an oxygenase component HpaH.

The enzyme catalyses FADH2 + NAD(+) = FAD + NADH + 2 H(+). The catalysed reaction is FADH2 + NADP(+) = FAD + NADPH + 2 H(+). Involved in the pathway of tryptophan degradation. Reduces FAD/FMN to FADH(2)/FMNH(2), which are subsequently used for the hydroxylation of anthranilate. It can reduce either FAD or flavin mononucleotide (FMN) but prefers FAD. The enzyme has a slight preference for NADPH as acceptor. The sequence is that of NAD(P)H-dependent FAD/FMN reductase GTNG_3158 from Geobacillus thermodenitrificans (strain NG80-2).